We begin with the raw amino-acid sequence, 394 residues long: Protein TsgA homolog (394 aa).

A run of 12 helical transmembrane segments spans residues 11–31 (WISYLSYALTGALVIVTGIVM), 51–71 (FLNAGILISIFLNAWLMEIIP), 76–96 (LVFGFILMLIAIAGLMVGHNL), 101–121 (ISMFIFGVVSGITMSIGTFLV), 134–154 (LLFTDSFFSMAGMIFPIAAAM), 162–182 (WYWVYACIGLLYVGIFVLTLC), 206–226 (VGVLFLAIAALCYILGQLGFI), 246–266 (QLVSNFWISYMIGMWIFSFIL), 274–294 (IVTVLAAMATLAMYLFVSTDN), 302–322 (ILALGFVSSAIYTTLITLGSL), 334–354 (FILTCGTVGTMLTFVVTGPIV), and 363–383 (LATANGLYLAVFILCLALGFF).

It belongs to the major facilitator superfamily. TsgA family.

It is found in the cell inner membrane. The chain is Protein TsgA homolog from Yersinia pseudotuberculosis serotype O:1b (strain IP 31758).